The primary structure comprises 341 residues: Lipoyl synthase (341 aa).

Residues Cys85, Cys90, Cys96, Cys111, Cys115, Cys118, and Ser325 each coordinate [4Fe-4S] cluster. The region spanning 97–314 (FSGGTATFMI…AEEGYKMGFK (218 aa)) is the Radical SAM core domain.

It belongs to the radical SAM superfamily. Lipoyl synthase family. [4Fe-4S] cluster serves as cofactor.

It localises to the cytoplasm. It catalyses the reaction [[Fe-S] cluster scaffold protein carrying a second [4Fe-4S](2+) cluster] + N(6)-octanoyl-L-lysyl-[protein] + 2 oxidized [2Fe-2S]-[ferredoxin] + 2 S-adenosyl-L-methionine + 4 H(+) = [[Fe-S] cluster scaffold protein] + N(6)-[(R)-dihydrolipoyl]-L-lysyl-[protein] + 4 Fe(3+) + 2 hydrogen sulfide + 2 5'-deoxyadenosine + 2 L-methionine + 2 reduced [2Fe-2S]-[ferredoxin]. It participates in protein modification; protein lipoylation via endogenous pathway; protein N(6)-(lipoyl)lysine from octanoyl-[acyl-carrier-protein]: step 2/2. Catalyzes the radical-mediated insertion of two sulfur atoms into the C-6 and C-8 positions of the octanoyl moiety bound to the lipoyl domains of lipoate-dependent enzymes, thereby converting the octanoylated domains into lipoylated derivatives. This is Lipoyl synthase from Pseudomonas fluorescens (strain SBW25).